Consider the following 249-residue polypeptide: Methylthioribulose-1-phosphate dehydratase (249 aa).

Cys-102 lines the substrate pocket. Zn(2+) contacts are provided by His-120 and His-122. Residue Glu-148 is the Proton donor/acceptor of the active site. His-205 contacts Zn(2+).

Belongs to the aldolase class II family. MtnB subfamily. Requires Zn(2+) as cofactor.

The protein localises to the cytoplasm. The catalysed reaction is 5-(methylsulfanyl)-D-ribulose 1-phosphate = 5-methylsulfanyl-2,3-dioxopentyl phosphate + H2O. The protein operates within amino-acid biosynthesis; L-methionine biosynthesis via salvage pathway; L-methionine from S-methyl-5-thio-alpha-D-ribose 1-phosphate: step 2/6. Its function is as follows. Catalyzes the dehydration of methylthioribulose-1-phosphate (MTRu-1-P) into 2,3-diketo-5-methylthiopentyl-1-phosphate (DK-MTP-1-P). The protein is Methylthioribulose-1-phosphate dehydratase of Botryotinia fuckeliana (strain B05.10) (Noble rot fungus).